A 149-amino-acid chain; its full sequence is DnaJ homolog subfamily C member 24 (149 aa).

The J domain occupies 11–82 (DWYSILGADP…ETKREYDLQR (72 aa)). In terms of domain architecture, DPH-type MB spans 93 to 148 (VDAQVYLEEMSWNEGDHSFYLSCRCGGKYSVSKDEAEEVSLISCDTCSLIIELLHY). Zn(2+) is bound by residues cysteine 115, cysteine 117, cysteine 136, and cysteine 139.

The protein belongs to the DPH4 family. As to quaternary structure, monomer and homooligomer. Iron binding promotes oligomerization.

It localises to the cytoplasm. Its subcellular location is the cytoskeleton. Its pathway is protein modification; peptidyl-diphthamide biosynthesis. Stimulates the ATPase activity of several Hsp70-type chaperones. This ability is enhanced by iron-binding. The iron-bound form is redox-active and can function as electron carrier. Plays a role in the diphthamide biosynthesis, a post-translational modification of histidine which occurs in translation elongation factor 2 (EEF2) which can be ADP-ribosylated by diphtheria toxin and by Pseudomonas exotoxin A (Eta). This is DnaJ homolog subfamily C member 24 from Homo sapiens (Human).